We begin with the raw amino-acid sequence, 356 residues long: 5-formaminoimidazole-4-carboxamide-1-(beta)-D-ribofuranosyl 5'-monophosphate synthetase (356 aa).

Residues histidine 27 and serine 94 each coordinate 5-amino-1-(5-phospho-beta-D-ribosyl)imidazole-4-carboxamide. Residues threonine 101–serine 333 form the ATP-grasp domain. Residues proline 145 to tyrosine 196 and glutamate 226 each bind ATP. Asparagine 255 serves as a coordination point for 5-amino-1-(5-phospho-beta-D-ribosyl)imidazole-4-carboxamide. Residues glutamate 293 and glutamate 306 each contribute to the Mg(2+) site.

Belongs to the phosphohexose mutase family. It depends on Mg(2+) as a cofactor. Requires Mn(2+) as cofactor.

It catalyses the reaction 5-amino-1-(5-phospho-beta-D-ribosyl)imidazole-4-carboxamide + formate + ATP = 5-formamido-1-(5-phospho-D-ribosyl)imidazole-4-carboxamide + ADP + phosphate. It participates in purine metabolism; IMP biosynthesis via de novo pathway; 5-formamido-1-(5-phospho-D-ribosyl)imidazole-4-carboxamide from 5-amino-1-(5-phospho-D-ribosyl)imidazole-4-carboxamide (formate route): step 1/1. Functionally, catalyzes the ATP- and formate-dependent formylation of 5-aminoimidazole-4-carboxamide-1-beta-d-ribofuranosyl 5'-monophosphate (AICAR) to 5-formaminoimidazole-4-carboxamide-1-beta-d-ribofuranosyl 5'-monophosphate (FAICAR) in the absence of folates. In Methanosarcina acetivorans (strain ATCC 35395 / DSM 2834 / JCM 12185 / C2A), this protein is 5-formaminoimidazole-4-carboxamide-1-(beta)-D-ribofuranosyl 5'-monophosphate synthetase.